Reading from the N-terminus, the 101-residue chain is Large ribosomal subunit protein bL28 (101 aa).

It belongs to the bacterial ribosomal protein bL28 family.

The sequence is that of Large ribosomal subunit protein bL28 from Rhodopseudomonas palustris (strain BisB5).